Here is a 20-residue protein sequence, read N- to C-terminus: Cytochrome c oxidase subunit 5A-1, mitochondrial (20 aa).

This sequence belongs to the cytochrome c oxidase subunit 5A family. In terms of assembly, component of the cytochrome c oxidase (complex IV, CIV), a multisubunit enzyme composed of 14 subunits. The complex is composed of a catalytic core of 3 subunits MT-CO1, MT-CO2 and MT-CO3, encoded in the mitochondrial DNA, and 11 supernumerary subunits COX4I, COX5A, COX5B, COX6A, COX6B, COX6C, COX7A, COX7B, COX7C, COX8 and NDUFA4, which are encoded in the nuclear genome. The complex exists as a monomer or a dimer and forms supercomplexes (SCs) in the inner mitochondrial membrane with NADH-ubiquinone oxidoreductase (complex I, CI) and ubiquinol-cytochrome c oxidoreductase (cytochrome b-c1 complex, complex III, CIII), resulting in different assemblies (supercomplex SCI(1)III(2)IV(1) and megacomplex MCI(2)III(2)IV(2)). Interacts with AFG1L. Interacts with RAB5IF.

The protein localises to the mitochondrion inner membrane. It functions in the pathway energy metabolism; oxidative phosphorylation. Its function is as follows. Component of the cytochrome c oxidase, the last enzyme in the mitochondrial electron transport chain which drives oxidative phosphorylation. The respiratory chain contains 3 multisubunit complexes succinate dehydrogenase (complex II, CII), ubiquinol-cytochrome c oxidoreductase (cytochrome b-c1 complex, complex III, CIII) and cytochrome c oxidase (complex IV, CIV), that cooperate to transfer electrons derived from NADH and succinate to molecular oxygen, creating an electrochemical gradient over the inner membrane that drives transmembrane transport and the ATP synthase. Cytochrome c oxidase is the component of the respiratory chain that catalyzes the reduction of oxygen to water. Electrons originating from reduced cytochrome c in the intermembrane space (IMS) are transferred via the dinuclear copper A center (CU(A)) of subunit 2 and heme A of subunit 1 to the active site in subunit 1, a binuclear center (BNC) formed by heme A3 and copper B (CU(B)). The BNC reduces molecular oxygen to 2 water molecules using 4 electrons from cytochrome c in the IMS and 4 protons from the mitochondrial matrix. This Thunnus obesus (Bigeye tuna) protein is Cytochrome c oxidase subunit 5A-1, mitochondrial.